We begin with the raw amino-acid sequence, 99 residues long: DNA-directed RNA polymerase subunit Rpo11 (99 aa).

It belongs to the archaeal Rpo11/eukaryotic RPB11/RPC19 RNA polymerase subunit family. Part of the RNA polymerase complex. Forms an Rpo3-Rpo10-Rpo11-Rpo12 complex upon coexpression.

It localises to the cytoplasm. The catalysed reaction is RNA(n) + a ribonucleoside 5'-triphosphate = RNA(n+1) + diphosphate. Its function is as follows. DNA-dependent RNA polymerase (RNAP) catalyzes the transcription of DNA into RNA using the four ribonucleoside triphosphates as substrates. This is DNA-directed RNA polymerase subunit Rpo11 from Methanocaldococcus jannaschii (strain ATCC 43067 / DSM 2661 / JAL-1 / JCM 10045 / NBRC 100440) (Methanococcus jannaschii).